The primary structure comprises 340 residues: Tetrathionate reductase subunit C (340 aa).

The next 9 helical transmembrane spans lie at 19–39 (WLPW…AALF), 57–77 (ALLI…ADLH), 94–114 (WMPW…LWFL), 128–148 (VTKW…IYTG), 164–184 (AFPV…MIVA), 195–215 (ILWG…MWVS), 236–256 (YYAV…SLAL), 266–286 (VLLV…LLIQ), and 306–326 (TDGW…LIII).

Belongs to the NrfD family. As to quaternary structure, probably composed of three subunits: TtrA, TtrB and TtrC.

It is found in the cell inner membrane. Its function is as follows. Part of a membrane-bound tetrathionate reductase that catalyzes the reduction of tetrathionate to thiosulfate. TtrC probably anchors TtrA and TtrB to the periplasmic face of the cytoplasmic membrane. May transfer electrons from membrane quinol to TtrB. During mice infection, the ability to use tetrathionate as an electron acceptor is a growth advantage for S.typhimurium over the competing microbiota in the lumen of the inflamed gut. This chain is Tetrathionate reductase subunit C (ttrC), found in Salmonella typhimurium (strain LT2 / SGSC1412 / ATCC 700720).